The following is a 299-amino-acid chain: ATP phosphoribosyltransferase (299 aa).

This sequence belongs to the ATP phosphoribosyltransferase family. Long subfamily. It depends on Mg(2+) as a cofactor.

The protein resides in the cytoplasm. The enzyme catalyses 1-(5-phospho-beta-D-ribosyl)-ATP + diphosphate = 5-phospho-alpha-D-ribose 1-diphosphate + ATP. Its pathway is amino-acid biosynthesis; L-histidine biosynthesis; L-histidine from 5-phospho-alpha-D-ribose 1-diphosphate: step 1/9. Its activity is regulated as follows. Feedback inhibited by histidine. Its function is as follows. Catalyzes the condensation of ATP and 5-phosphoribose 1-diphosphate to form N'-(5'-phosphoribosyl)-ATP (PR-ATP). Has a crucial role in the pathway because the rate of histidine biosynthesis seems to be controlled primarily by regulation of HisG enzymatic activity. The sequence is that of ATP phosphoribosyltransferase from Mannheimia succiniciproducens (strain KCTC 0769BP / MBEL55E).